Consider the following 872-residue polypeptide: Alanine--tRNA ligase (872 aa).

4 residues coordinate Zn(2+): His567, His571, Cys669, and His673.

The protein belongs to the class-II aminoacyl-tRNA synthetase family. The cofactor is Zn(2+).

The protein localises to the cytoplasm. The enzyme catalyses tRNA(Ala) + L-alanine + ATP = L-alanyl-tRNA(Ala) + AMP + diphosphate. Catalyzes the attachment of alanine to tRNA(Ala) in a two-step reaction: alanine is first activated by ATP to form Ala-AMP and then transferred to the acceptor end of tRNA(Ala). Also edits incorrectly charged Ser-tRNA(Ala) and Gly-tRNA(Ala) via its editing domain. The chain is Alanine--tRNA ligase from Streptococcus suis (strain 98HAH33).